A 367-amino-acid chain; its full sequence is Quinolinate synthase (367 aa).

Positions 64 and 82 each coordinate iminosuccinate. [4Fe-4S] cluster is bound at residue Cys-127. Residues 153-155 (YVN) and Ser-170 each bind iminosuccinate. Residue Cys-216 participates in [4Fe-4S] cluster binding. Iminosuccinate is bound by residues 242-244 (HPE) and Thr-259. [4Fe-4S] cluster is bound at residue Cys-302.

The protein belongs to the quinolinate synthase family. Type 2 subfamily. Requires [4Fe-4S] cluster as cofactor.

The protein resides in the cytoplasm. The enzyme catalyses iminosuccinate + dihydroxyacetone phosphate = quinolinate + phosphate + 2 H2O + H(+). The protein operates within cofactor biosynthesis; NAD(+) biosynthesis; quinolinate from iminoaspartate: step 1/1. In terms of biological role, catalyzes the condensation of iminoaspartate with dihydroxyacetone phosphate to form quinolinate. The protein is Quinolinate synthase of Caulobacter vibrioides (strain ATCC 19089 / CIP 103742 / CB 15) (Caulobacter crescentus).